The primary structure comprises 111 residues: NADH-ubiquinone oxidoreductase chain 3 (111 aa).

Transmembrane regions (helical) follow at residues 2–22 (ILIWLSIFMLVFIMLTLGMFV), 54–74 (FFVITLIFLIFDVEIYLLLPM), and 82–102 (PTTYLIIFFTFILVAGVFYEW).

The protein belongs to the complex I subunit 3 family.

Its subcellular location is the mitochondrion membrane. The enzyme catalyses a ubiquinone + NADH + 5 H(+)(in) = a ubiquinol + NAD(+) + 4 H(+)(out). In terms of biological role, core subunit of the mitochondrial membrane respiratory chain NADH dehydrogenase (Complex I) that is believed to belong to the minimal assembly required for catalysis. Complex I functions in the transfer of electrons from NADH to the respiratory chain. The immediate electron acceptor for the enzyme is believed to be ubiquinone. The chain is NADH-ubiquinone oxidoreductase chain 3 (ND3) from Artemia franciscana (Brine shrimp).